The sequence spans 203 residues: CASP-like protein 1B1 (203 aa).

Residues 1-24 (MALVNAEKPEVGSSPSSLGPRNKS) lie on the Cytoplasmic side of the membrane. The chain crosses the membrane as a helical span at residues 25–45 (WVLLMLRFVAFLATAAATIVM). The Extracellular portion of the chain corresponds to 46-76 (AANRETKTFVVATIGSTPIKATVTAKFQHTP). Residues 77–97 (AFVFFVIANGMGSIHNLVMIA) traverse the membrane as a helical segment. Residues 98–114 (GDTFVRKFDYKGLRWVT) are Cytoplasmic-facing. The chain crosses the membrane as a helical span at residues 115–135 (VAILDMLTAALISGGVNAAVF). Topologically, residues 136–165 (MAELGKNGNSHAKWNKICDRFGSFCDHGGA) are extracellular. Residues 166–186 (AIIASFIGLLLMLVISIISII) traverse the membrane as a helical segment. Residues 187–203 (KLLKPKSPLVDSHVLAP) lie on the Cytoplasmic side of the membrane.

Belongs to the Casparian strip membrane proteins (CASP) family. Homodimer and heterodimers.

Its subcellular location is the cell membrane. In Ricinus communis (Castor bean), this protein is CASP-like protein 1B1.